A 953-amino-acid polypeptide reads, in one-letter code: Atromentin synthetase invA2 (953 aa).

Residues 38 to 460 are adenylation (A) domain; it reads RAVSQYPNHE…SGRIKDTVIV (423 aa). One can recognise a Carrier domain in the interval 592–670; it reads APSTETEKTL…SLAKYVDSLI (79 aa). Positions 597 to 667 are thiolation and peptide carrier (T) domain; the sequence is TEKTLAGIYA…VISSLAKYVD (71 aa). Position 629 is an O-(pantetheine 4'-phosphoryl)serine (Ser629). The tract at residues 693-795 is thioesterase (TE) domain; sequence PIFMVHPGVG…FTGLINIPPH (103 aa).

Belongs to the ATP-dependent AMP-binding enzyme family.

It participates in secondary metabolite biosynthesis. In terms of biological role, an L-tyrosine:2-oxoglutarate aminotransferase (probably invD) and atromentin synthetase invA2 catalyze consecutive steps to turn over L-tyrosine into atromentin, which represents the generic precursor molecule for the entire terphenylquinone and pulvinic acid family of pigments, which are widely distributed secondary metabolites in homobasidiomycetes. The first step catalyzed by the aminotransferase converts L-tyrosine in to 4-hydroxyphenylpyruvate (4-HPP). Adenylation of two 4-HPP monomers by the invA2 adenylation (A) domain, covalent tethering of the monomers as a thioester and oxoester onto the invA2 thiolation (T) and thioesterase (TE) domains, respectively, and symmetric C-C-bond formation between two monomers catalyzed by the invA2 TE domain leads to atromentin. The polypeptide is Atromentin synthetase invA2 (invA2) (Paxillus involutus (Naked brimcap)).